A 365-amino-acid polypeptide reads, in one-letter code: Sulfate/thiosulfate import ATP-binding protein CysA (365 aa).

The ABC transporter domain occupies 3–237 (IEIANIKKSF…PATRFVLEFM (235 aa)). 35–42 (GPSGSGKT) contacts ATP.

This sequence belongs to the ABC transporter superfamily. Sulfate/tungstate importer (TC 3.A.1.6) family. As to quaternary structure, the complex is composed of two ATP-binding proteins (CysA), two transmembrane proteins (CysT and CysW) and a solute-binding protein (CysP).

Its subcellular location is the cell inner membrane. The catalysed reaction is sulfate(out) + ATP + H2O = sulfate(in) + ADP + phosphate + H(+). The enzyme catalyses thiosulfate(out) + ATP + H2O = thiosulfate(in) + ADP + phosphate + H(+). Part of the ABC transporter complex CysAWTP involved in sulfate/thiosulfate import. Responsible for energy coupling to the transport system. This is Sulfate/thiosulfate import ATP-binding protein CysA from Shigella flexneri.